Consider the following 449-residue polypeptide: tRNA-2-methylthio-N(6)-dimethylallyladenosine synthase (449 aa).

The 116-residue stretch at 13 to 128 (RRIFIETYGC…LPHLIGTVEK (116 aa)) folds into the MTTase N-terminal domain. [4Fe-4S] cluster is bound by residues Cys-22, Cys-58, Cys-92, Cys-166, Cys-170, and Cys-173. In terms of domain architecture, Radical SAM core spans 152-383 (SRIKISGFIS…ITLQLKISLM (232 aa)). Residues 386-449 (KENIGKTMEI…AATLFGDPKL (64 aa)) form the TRAM domain.

It belongs to the methylthiotransferase family. MiaB subfamily. In terms of assembly, monomer. The cofactor is [4Fe-4S] cluster.

Its subcellular location is the cytoplasm. The catalysed reaction is N(6)-dimethylallyladenosine(37) in tRNA + (sulfur carrier)-SH + AH2 + 2 S-adenosyl-L-methionine = 2-methylsulfanyl-N(6)-dimethylallyladenosine(37) in tRNA + (sulfur carrier)-H + 5'-deoxyadenosine + L-methionine + A + S-adenosyl-L-homocysteine + 2 H(+). Its function is as follows. Catalyzes the methylthiolation of N6-(dimethylallyl)adenosine (i(6)A), leading to the formation of 2-methylthio-N6-(dimethylallyl)adenosine (ms(2)i(6)A) at position 37 in tRNAs that read codons beginning with uridine. This Azobacteroides pseudotrichonymphae genomovar. CFP2 protein is tRNA-2-methylthio-N(6)-dimethylallyladenosine synthase.